The chain runs to 538 residues: Beta-1,4-mannosyl-glycoprotein 4-beta-N-acetylglucosaminyltransferase (538 aa).

Residues 1–7 (MKMRRYK) are Cytoplasmic-facing. Residues 8-23 (LFLMFCMAGLCLISFL) form a helical; Signal-anchor for type II membrane protein membrane-spanning segment. Residues 24 to 538 (HFFKTLSYVT…VRGKLDTAEG (515 aa)) lie on the Lumenal side of the membrane. The segment at 120 to 161 (PGTRMLEKPSPGRTEEKTEVSEGSSARGPARRPMRHVLSSRE) is disordered. Residues asparagine 245, asparagine 263, and asparagine 401 are each glycosylated (N-linked (GlcNAc...) asparagine). Positions 507–538 (REPKSTVEGGRQNQGSDGRSSAVRGKLDTAEG) are disordered.

The protein belongs to the glycosyltransferase 17 family. As to quaternary structure, interacts with MGAT4D. In terms of tissue distribution, highly expressed in brain and kidney and to a much lesser extent in stomach, heart, intestine, uterus, testis, ovary and lung. Not present in spleen, liver and muscle. In brain, expressed in neurons of hippocampus.

It is found in the golgi apparatus membrane. The catalysed reaction is N(4)-{beta-D-GlcNAc-(1-&gt;2)-alpha-D-Man-(1-&gt;3)-[beta-D-GlcNAc-(1-&gt;2)-alpha-D-Man-(1-&gt;6)]-beta-D-Man-(1-&gt;4)-beta-D-GlcNAc-(1-&gt;4)-beta-D-GlcNAc}-L-asparaginyl-[protein] + UDP-N-acetyl-alpha-D-glucosamine = N(4)-{beta-D-GlcNAc-(1-&gt;2)-alpha-D-Man-(1-&gt;3)-[beta-D-GlcNAc-(1-&gt;4)]-[beta-D-GlcNAc-(1-&gt;2)-alpha-D-Man-(1-&gt;6)]-beta-D-Man-(1-&gt;4)-beta-D-GlcNAc-(1-&gt;4)-beta-D-GlcNAc}-L-asparaginyl-[protein] + UDP + H(+). It functions in the pathway protein modification; protein glycosylation. It is involved in the regulation of the biosynthesis and biological function of glycoprotein oligosaccharides. Catalyzes the addition of N-acetylglucosamine in beta 1-4 linkage to the beta-linked mannose of the trimannosyl core of N-linked sugar chains, called bisecting N-acetylglucosamine (GlcNAc). It is one of the most important enzymes involved in the regulation of the biosynthesis of glycoprotein oligosaccharides. The addition of this bisecting GlcNAc residue alters not only the composition, but also the conformation of the N-glycan. The introduction of the bisecting GlcNAc residue results in the suppression of further processing and elongation of N-glycans, precluding the formation of beta-1,6 GlcNAc branching, catalyzed by MGAT5 since it is unable to use the bisected oligosaccharide as a substrate. Addition of bisecting N-acetylglucosamine to CDH1/E-cadherin modulates CDH1 cell membrane location. Inhibits NeuAc-alpha-2,3-Gal-beta-1,4-GlcNAc- formation which modulates sialylation levels and plays a role in cell migration regulation. In brain, addition of bisecting N-acetylglucosamine to BACE1 blocks its lysosomal targeting in response to oxidative stress and further degradation which increases its location to early endosome and the APP cleavage. This Mus musculus (Mouse) protein is Beta-1,4-mannosyl-glycoprotein 4-beta-N-acetylglucosaminyltransferase.